The chain runs to 393 residues: MKSTGLLLGYFLMKVLVCDAEGEPGKSLDGAVTASGSNDSRDGENGLSETPHTEDRCRGYYDVMGQWDPPFVCRTGSYLYCCGTCGFRFCCEFKNSRLDQTTCKNYDTPPWSMTGRPPPKMMDQHDPTKDKTNLIVYIICGVVAIMALVGIFTKLGLEKAHRPHRENMSRALAQVMRQTAPGEHVEREESLAVHGQPYENLQARATGNNLQSAQMNSVGPSSSMMQAMTPYPALGQVPVAHPYEPSPAAKELNKYASLKAVAEKANENFYTNRRHLADLAAKGTLPMHSVSLEQEPTNPYSPELPCQKQNGHKSKSTKVHSSHPLAYGSNTIANPGRMSSWETTETLGRRHTYGPKKHSATMEQMNELTSAQSQHYLPPHPYFVTNSKTEVTV.

An N-terminal signal peptide occupies residues 1 to 20 (MKSTGLLLGYFLMKVLVCDA). Topologically, residues 21-131 (EGEPGKSLDG…MDQHDPTKDK (111 aa)) are extracellular. The tract at residues 28 to 52 (LDGAVTASGSNDSRDGENGLSETPH) is disordered. A glycan (N-linked (GlcNAc...) asparagine) is linked at asparagine 38. The chain crosses the membrane as a helical span at residues 132-152 (TNLIVYIICGVVAIMALVGIF). At 153–393 (TKLGLEKAHR…VTNSKTEVTV (241 aa)) the chain is on the cytoplasmic side. A disordered region spans residues 307–340 (QKQNGHKSKSTKVHSSHPLAYGSNTIANPGRMSS). Basic residues predominate over residues 310-321 (NGHKSKSTKVHS).

This sequence belongs to the shisa family. SHISA9 subfamily. In terms of assembly, component of some AMPA receptors (ionotropic glutamate receptors) complex.

It is found in the cell projection. The protein resides in the dendritic spine membrane. The protein localises to the synapse. Functionally, regulator of short-term neuronal synaptic plasticity in the dentate gyrus. Associates with AMPA receptors (ionotropic glutamate receptors) in synaptic spines and promotes AMPA receptor desensitization at excitatory synapses. The sequence is that of Protein shisa-9B (shisa9b) from Danio rerio (Zebrafish).